A 72-amino-acid chain; its full sequence is Translation initiation factor IF-1 (72 aa).

The S1-like domain occupies 2 to 72 (AKEDVIEVEG…TRGRITYRYK (71 aa)). Tyr60 carries the phosphotyrosine modification.

It belongs to the IF-1 family. Component of the 30S ribosomal translation pre-initiation complex which assembles on the 30S ribosome in the order IF-2 and IF-3, IF-1 and N-formylmethionyl-tRNA(fMet); mRNA recruitment can occur at any time during PIC assembly.

The protein localises to the cytoplasm. One of the essential components for the initiation of protein synthesis. Stabilizes the binding of IF-2 and IF-3 on the 30S subunit to which N-formylmethionyl-tRNA(fMet) subsequently binds. Helps modulate mRNA selection, yielding the 30S pre-initiation complex (PIC). Upon addition of the 50S ribosomal subunit IF-1, IF-2 and IF-3 are released leaving the mature 70S translation initiation complex. The chain is Translation initiation factor IF-1 from Halalkalibacterium halodurans (strain ATCC BAA-125 / DSM 18197 / FERM 7344 / JCM 9153 / C-125) (Bacillus halodurans).